The following is a 343-amino-acid chain: 3-oxopimeloyl-[acyl-carrier-protein] synthase (343 aa).

Catalysis depends on residues Cys132 and His272. Residues 273 to 277 form an ACP-binding region; the sequence is QANHR. Residue Asn302 is part of the active site.

It belongs to the thiolase-like superfamily. BioZ family.

It carries out the reaction malonyl-[ACP] + an acyl-CoA + H(+) = a 3-oxoacyl-[ACP] + CO2 + CoA. It catalyses the reaction glutaryl-CoA + malonyl-[ACP] + H(+) = 3-oxo-6-carboxyhexanoyl-[ACP] + CO2 + CoA. Its pathway is cofactor biosynthesis; biotin biosynthesis. Involved in the formation of the biotin precursor pimeloyl-ACP. Catalyzes the condensation of glutaryl-CoA, an intermediate in lysine degradation, with malonyl-ACP to produce 3-oxopimeloyl-ACP. In Rhodothermus marinus (strain ATCC 43812 / DSM 4252 / R-10) (Rhodothermus obamensis), this protein is 3-oxopimeloyl-[acyl-carrier-protein] synthase.